Reading from the N-terminus, the 572-residue chain is Solute carrier family 22 member 16 (572 aa).

A helical transmembrane segment spans residues 21 to 41 (IFLYFICAFQNISCGIHYLAS). An N-linked (GlcNAc...) asparagine glycan is attached at N57. A run of 5 helical transmembrane segments spans residues 156-176 (LIQP…GYLS), 183-203 (LVLW…AFTF), 208-228 (FIVA…VVFV), 244-264 (IHLH…GYFV), and 268-288 (WIYQ…CWML). N-linked (GlcNAc...) asparagine glycosylation is present at N315. 6 consecutive transmembrane segments (helical) span residues 359-379 (TLIL…FSLN), 389-409 (LNLF…CLGM), 416-436 (NILI…MVIP), 441-461 (VWLV…FGLI), 476-496 (LAVG…PLCI), and 503-523 (IFMP…LTFL). The N-linked (GlcNAc...) asparagine glycan is linked to N559.

It belongs to the major facilitator (TC 2.A.1) superfamily. Organic cation transporter (TC 2.A.1.19) family.

Its subcellular location is the cell membrane. It catalyses the reaction (R)-carnitine(in) = (R)-carnitine(out). The enzyme catalyses spermidine(in) = spermidine(out). Its function is as follows. Facilitative organic cation transporter that mediates the transport of carnitine as well as the polyamine spermidine. Mediates the partially Na(+)-dependent bidirectional transport of carnitine. May mediate L-carnitine secretion from testis epididymal epithelium into the lumen which is involved in the maturation of spermatozoa. The protein is Solute carrier family 22 member 16 (SLC22A16) of Bos taurus (Bovine).